Reading from the N-terminus, the 955-residue chain is Auxin response factor 11 (955 aa).

A DNA-binding region (TF-B3) is located at residues 143 to 245 (FCKNLTASDT…QLLLGVRRAT (103 aa)). Residues 518 to 543 (ESKLNATSRDPRNTDSYTSRSTSEQN) show a composition bias toward polar residues. 2 disordered regions span residues 518–573 (ESKL…LSSA) and 609–646 (TQGNFVGQPHGHQVEQKGVLSPPKVESSKSPDGGKSVN). The segment covering 551–560 (KTRRSKKGLP) has biased composition (basic residues). A PB1 domain is found at 852-936 (RTYTKVQKQG…RCIRILSPSE (85 aa)).

Belongs to the ARF family. As to quaternary structure, homodimers and heterodimers.

It is found in the nucleus. Auxin response factors (ARFs) are transcriptional factors that bind specifically to the DNA sequence 5'-TGTCTC-3' found in the auxin-responsive promoter elements (AuxREs). The protein is Auxin response factor 11 (ARF11) of Oryza sativa subsp. indica (Rice).